A 287-amino-acid chain; its full sequence is Protease HtpX (287 aa).

2 helical membrane passes run 4–24 and 33–53; these read IFLL…VMSI and GGLL…SLAI. H139 lines the Zn(2+) pocket. E140 is a catalytic residue. Residue H143 participates in Zn(2+) binding. Helical transmembrane passes span 154-174 and 195-215; these read LIQG…AGII and AVVF…VAYF. E220 contacts Zn(2+).

The protein belongs to the peptidase M48B family. Zn(2+) is required as a cofactor.

It localises to the cell inner membrane. The sequence is that of Protease HtpX from Shewanella oneidensis (strain ATCC 700550 / JCM 31522 / CIP 106686 / LMG 19005 / NCIMB 14063 / MR-1).